We begin with the raw amino-acid sequence, 119 residues long: UPF0342 protein GK0640 (119 aa).

The protein belongs to the UPF0342 family.

This is UPF0342 protein GK0640 from Geobacillus kaustophilus (strain HTA426).